We begin with the raw amino-acid sequence, 335 residues long: 2-acylglycerol O-acyltransferase 2-A (335 aa).

The next 2 helical transmembrane spans lie at Trp-24–Phe-44 and Phe-47–Lys-67.

Belongs to the diacylglycerol acyltransferase family.

The protein resides in the endoplasmic reticulum membrane. It is found in the cytoplasm. Its subcellular location is the perinuclear region. It carries out the reaction a 2-acylglycerol + an acyl-CoA = a 1,2-diacylglycerol + CoA. The catalysed reaction is a 2-acylglycerol + an acyl-CoA = a 1,2-diacyl-sn-glycerol + CoA. It catalyses the reaction a 2-acylglycerol + an acyl-CoA = a 2,3-diacyl-sn-glycerol + CoA. The enzyme catalyses a 1-acylglycerol + an acyl-CoA = a 1,2-diacylglycerol + CoA. It carries out the reaction a 1-acylglycerol + an acyl-CoA = a 1,3-diacylglycerol + CoA. The catalysed reaction is 1-O-alkylglycerol + an acyl-CoA = 1-O-alkyl-3-acylglycerol + CoA. It catalyses the reaction an acyl-CoA + a 1,2-diacyl-sn-glycerol = a triacyl-sn-glycerol + CoA. It functions in the pathway glycerolipid metabolism; triacylglycerol biosynthesis. Catalyzes the formation of diacylglycerol from 2-monoacylglycerol and fatty acyl-CoA. Its function is as follows. Involved in glycerolipid synthesis and lipid metabolism. Catalyzes the formation of diacylglycerol, the precursor of triacylglycerol, by transferring the acyl chain of a fatty acyl-CoA to a monoacylglycerol. Plays a central role in absorption of dietary fat in the small intestine by catalyzing the resynthesis of triacylglycerol in enterocytes. Has a preference toward monoacylglycerols containing unsaturated fatty acids in an order of C18:3 &gt; C18:2 &gt; C18:1 &gt; C18:0 at sn-2. Able to use 1-monoalkylglycerol (1-MAkG, 1-O-alkylglycerol) as an acyl acceptor for the synthesis of monoalkyl-monoacylglycerol (MAMAG, 1-O-alkyl-3-acylglycerol or 1-O-alkyl-2-acylglycerol) and subsequently, with lower efficiency, may add another acyl chain producing monoalkyl-diacylglycerol (MADAG, 1-O-alkyl-2,3-diacylglycerol). Possesses weak but significant activity with diacylglycerol as substrate, producing triacylglycerol (triacyl-sn-glycerol). The sequence is that of 2-acylglycerol O-acyltransferase 2-A (mogat2-a) from Xenopus laevis (African clawed frog).